The chain runs to 278 residues: Fe(II)/2-oxoglutarate-dependent dioxygenase nvfI (278 aa).

It belongs to the asaB hydroxylase/desaturase family.

It carries out the reaction asnovolin A + 2-oxoglutarate + 2 O2 = fumigatonoid A + succinate + CO2. It functions in the pathway secondary metabolite biosynthesis; terpenoid biosynthesis. Fe(II)/2-oxoglutarate-dependent dioxygenase; part of the gene cluster that mediates the biosynthesis of novofumigatonin, a heavily oxygenated meroterpenoid containing a unique orthoester moiety. The first step of the pathway is the synthesis of 3,5-dimethylorsellinic acid (DMOA) by the polyketide synthase nvfA via condensation of one acetyl-CoA starter unit with 3 malonyl-CoA units and 2 methylations. DMOA is then converted to farnesyl-DMOA by the farnesyltransferase nvfB. Epoxydation by FAD-dependent monooxygenase nvfK, followed by a protonation-initiated cyclization catalyzed by the terpene cyclase nvfL leads to the production of asnavolin H. The short chain dehydrogenase nvfC then as a 3-OH dehydrogenase of asnovolin H to yield chemesin D. There are two branches to synthesize asnovolin A from chemesin D. In one branch, chemesin D undergoes Baeyer-Villiger oxidation by nvfH, methylation by nvfJ, and enoyl reduction by the nvfM D enoylreductase that reduces the double bond between C-5'and C-6', to form respectively asnovolin I, asnovolin K, and asnovolin A. In the other branch, the methylation precedes the Baeyer-Villiger oxidation and the enoyl reduction to yield asnovolin A via the asnovolin J intermediate. Asnovolin A is further converted to fumigatonoid A by the Fe(II)/2-oxoglutarate-dependent dioxygenase nvfI that catalyzes an endoperoxidation reaction. The alpha/beta hydrolase nvfD then acts as an epimerase that converts fumigatonoid A to its C-5' epimer, which then undergoes spontaneous or nvfD-catalyzed lactonization. The following step utilizes the ketoreductase nvfG to produce fumigatonoid B. The dioxygenase nvfE further converts fumigatonoid B into fumigatonoid C. Finally the Fe(II)/2-oxoglutarate-dependent dioxygenase nvfF catalyzes two rounds of oxidation to transform fumigatonoid C into the end product, novofumigatonin A. This Aspergillus novofumigatus (strain IBT 16806) protein is Fe(II)/2-oxoglutarate-dependent dioxygenase nvfI.